Reading from the N-terminus, the 364-residue chain is Protein FAM81A (364 aa).

Coiled-coil stretches lie at residues Phe-75–Ile-107, Asn-158–Ser-189, and Ala-261–Asn-287. Positions Glu-281 to His-300 are disordered.

It belongs to the FAM81 family. Interacts with DLG4/PSD-95, GRIN2B/GLUN2B and SYNGAP1; the interactions facilitate condensate formation. In terms of tissue distribution, expressed in most regions of the brain (at protein level).

The protein resides in the postsynaptic density. The protein localises to the cytoplasm. In terms of biological role, facilitates the interaction and assembly of proteins within the postsynaptic density by promoting the condensation of postsynaptic proteins via liquid-liquid phase separation. Required for neuronal activity. Accumulation at the postsynaptic density results in enlargement of dendritic spines. The polypeptide is Protein FAM81A (Fam81a) (Mus musculus (Mouse)).